Reading from the N-terminus, the 137-residue chain is Nucleoside diphosphate kinase (137 aa).

Residues lysine 9, phenylalanine 57, arginine 85, threonine 91, arginine 102, and asparagine 112 each contribute to the ATP site. Histidine 115 acts as the Pros-phosphohistidine intermediate in catalysis.

Belongs to the NDK family. Homotetramer. Mg(2+) serves as cofactor.

It is found in the cytoplasm. The catalysed reaction is a 2'-deoxyribonucleoside 5'-diphosphate + ATP = a 2'-deoxyribonucleoside 5'-triphosphate + ADP. It catalyses the reaction a ribonucleoside 5'-diphosphate + ATP = a ribonucleoside 5'-triphosphate + ADP. In terms of biological role, major role in the synthesis of nucleoside triphosphates other than ATP. The ATP gamma phosphate is transferred to the NDP beta phosphate via a ping-pong mechanism, using a phosphorylated active-site intermediate. The sequence is that of Nucleoside diphosphate kinase from Campylobacter jejuni subsp. doylei (strain ATCC BAA-1458 / RM4099 / 269.97).